We begin with the raw amino-acid sequence, 224 residues long: Ribose-5-phosphate isomerase A 2 (224 aa).

Substrate contacts are provided by residues 27-30 (SGST), 83-86 (DGTD), and 96-99 (KGGG). The Proton acceptor role is filled by Glu105. Substrate is bound at residue Lys123.

The protein belongs to the ribose 5-phosphate isomerase family. Homodimer.

The catalysed reaction is aldehydo-D-ribose 5-phosphate = D-ribulose 5-phosphate. It functions in the pathway carbohydrate degradation; pentose phosphate pathway; D-ribose 5-phosphate from D-ribulose 5-phosphate (non-oxidative stage): step 1/1. Its function is as follows. Catalyzes the reversible conversion of ribose-5-phosphate to ribulose 5-phosphate. This chain is Ribose-5-phosphate isomerase A 2, found in Oceanobacillus iheyensis (strain DSM 14371 / CIP 107618 / JCM 11309 / KCTC 3954 / HTE831).